We begin with the raw amino-acid sequence, 681 residues long: Cryptochrome-1 (681 aa).

Residues 1–489 (MSGSVSGCGS…AKARLHEALS (489 aa)) are CNT1, binds chromophores to sense blue light and mediate CRY dimerization. The Photolyase/cryptochrome alpha/beta domain maps to 12–141 (GCSIVWFRRD…AVRSFNADLL (130 aa)). Cysteines 80 and 190 form a disulfide. Residue tyrosine 235 coordinates FAD. Asparagine 238 serves as a coordination point for Mg(2+). Residue arginine 239 participates in ATP binding. Lysine 241, serine 244, and threonine 246 together coordinate Mg(2+). FAD contacts are provided by residues 247-251 (TSFLS) and serine 293. Histidine 358 is a Mg(2+) binding site. Residues aspartate 359 and 390–392 (DAD) each bind FAD. 359–360 (DR) provides a ligand contact to ATP. Aspartate 409 contacts ATP. Residues 490–681 (QMWQLEAASR…LNWRRLSQTG (192 aa)) form a CCT1/CCE1, mediates blue light signaling region. 2 disordered regions span residues 525 to 598 (RDIT…EPAS) and 616 to 664 (STED…TSSY). Polar residues predominate over residues 583 to 598 (MVNTNQAQQRRAEPAS). Serine 616 carries the phosphoserine modification. A Phosphothreonine modification is found at threonine 621.

Belongs to the DNA photolyase class-1 family. In terms of assembly, homodimer. Interacts with ADO1, COP1 and PHYA. Interacts specifically with the dark/far-red (Pr) state of PHYB, but not with the red light-activated (Pfr). Interacts with PIF4 and PIF5 in the nucleus in response to low blue light (LBL). Binds to SPA1 and SPA4 in response to blue light, this interaction prevents SPA1/COP1 complex formation and thus avoid COP1-dependent degradation of the transcription factor HY5 by the proteasome and promotes hypocotyl elongation. Interacts with TCP2. Binding to ATP mediates conformational changes which facilitate flavin binding. It depends on FAD as a cofactor. (6R)-5,10-methylene-5,6,7,8-tetrahydrofolate serves as cofactor. Autophosphorylated; in response to blue light and when in complex with FAD cofactor. Kinase activity is optimal in the presence of magnesium ions, about 30 percent of the optimal activity in the presence of manganese ions, but inactive with calcium ions. Adopts an open conformation when phosphorylated upon photoexcitation and thus interacts with signaling partner proteins. In terms of tissue distribution, widely expressed. Expressed in the aerial tissues (e.g. cotyledons and leaf primordia), but not detected in the roots.

Its subcellular location is the cytoplasm. It localises to the nucleus. It is found in the PML body. Its activity is regulated as follows. Light exposure induces a conformational change in the C-terminal domain CCT1 required for activity. In terms of biological role, photoreceptor that mediates primarily blue light inhibition of hypocotyl elongation and photoperiodic control of floral initiation, and regulates other light responses, including circadian rhythms, tropic growth, stomata opening, guard cell development, root development, bacterial and viral pathogen responses, abiotic stress responses, cell cycles, programmed cell death, apical dominance, fruit and ovule development, seed dormancy, and magnetoreception. Photoexcited cryptochromes interact with signaling partner proteins to alter gene expression at both transcriptional and post-translational levels and, consequently, regulate the corresponding metabolic and developmental programs. Blue-light absorbing flavoprotein that activates reversible flavin photoreduction via an electron transport chain comprising a tryptophan triad (W-324, W-377 and W-400), accompanied by a large conformational change upon photoexcitation, or via an alternative electron transport that involves small metabolites, including NADPH, NADH, and ATP. The half-life of the activated signaling state is about 5 minutes. Also involved in the detection of blue/green ratio in light (shade under leaf canopies) and subsequent adaptations on plant growth and development. In darkness, the dark reoxidation of flavin occurs and leads to inactivated state. Perceives low blue light (LBL) and responds by directly contacting two bHLH transcription factors, PIF4 and PIF5, at chromatin on E-box variant 5'-CA[CT]GTG-3' to promote their activity and stimulate specific gene expression to adapt global physiology (e.g. hypocotyl elongation and hyponastic growth in low blue light). When activated by high-intensity blue light, catalyzes direct enzymatic conversion of molecular oxygen O(2) to reactive oxygen species (ROS) and hydrogen peroxide H(2)O(2) in vitro. ROS accumulation upon activation by blue light leads to cell death in protoplasts. Seems essential for blue-light-triggered and singlet oxygen-mediated programmed cell death (PCD). Required for the induction of nuclear genes encoding photoprotective components by GATA24 and GATA28 in extreme light intensities that exceed the electron utilization capacity of the chloroplast. Involved in shortening the circadian clock period, especially at 27 degrees Celsius, in blue light (BL) and required to maintain clock genes expression rhythm. Mediates blue light-induced gene expression and hypocotyl elongation through the inhibition of COP1-mediated degradation of the transcription factors BIT1 and HY5 and via the activation of anion channels at the plasma membrane, probably via auxin signaling. Required for the hypocotyl hook formation in darkness. Involved in blue light-dependent stomatal opening, CHS gene expression, transpiration, inhibition of stem growth and increase of root growth, probably by regulating abscisic acid (ABA). Prevents lateral roots growth by inhibiting auxin transport. Necessary for shade avoidance syndrome (SAS), characterized by leaf hyponasty and reduced lamina/petiole ratio, when exposed to blue light attenuation. Together with phototropins, involved in phototropism regulation by various blue light fluence; blue light attenuates phototropism in high fluence rates (100 umol.m-2.s-1) but enhances phototropism in low fluence rates (&lt;1.0 umol.m-2.s-1). Required for blue/UV-A wavelengths-mediated inhibition of explants shoot regeneration in vitro (e.g. new shoot apical meristems regeneration from excised cotyledons). Modulates anthocyanin accumulation in a PHYA-dependent manner in far-red-light. Acts as a PHYA/PHYB-dependent modulator of chlorophyll accumulation in red light. Contributes to most blue light deetiolation responses. May act as a chemical magnetoreceptor, via magnetically sensitive kinetics and quantum yields of photo-induced flavin / tryptophan radical pairs. The effect of near-null magnetic field on flowering is altered by changes of blue light cycle and intensity in a CRY1/CRY2-dependent manner. Involved in the strigolactone signaling that regulates hypocotyl growth in response to blue light. Modulates temperature-dependent growth and physiology maintenance, especially at warm ambient temperatures (e.g. 27 degrees Celsius) and in white light and low-light conditions, via HFR1-dependent activity; this process requires PTAC12/HMR/PAP5 (transcriptional transactivator). Functionally, implicated in promoting R protein-mediated resistance to Pseudomonas syringae pv. tomato (Pst.) DC3000 under continuous light conditions. Promotes systemic acquired resistance (SAR) and PR gene expression triggered by P.syringae. This chain is Cryptochrome-1, found in Arabidopsis thaliana (Mouse-ear cress).